A 383-amino-acid polypeptide reads, in one-letter code: S-adenosylmethionine synthase (383 aa).

An ATP-binding site is contributed by histidine 15. Aspartate 17 lines the Mg(2+) pocket. Glutamate 43 serves as a coordination point for K(+). The L-methionine site is built by glutamate 56 and glutamine 99. The tract at residues 99–109 is flexible loop; sequence QSPDINQGVDR. ATP contacts are provided by residues 164 to 166, 230 to 231, aspartate 239, 245 to 246, alanine 262, and lysine 266; these read DAK, RF, and RK. Residue aspartate 239 participates in L-methionine binding. Lysine 270 contacts L-methionine.

Belongs to the AdoMet synthase family. Homotetramer; dimer of dimers. The cofactor is Mg(2+). K(+) is required as a cofactor.

Its subcellular location is the cytoplasm. It catalyses the reaction L-methionine + ATP + H2O = S-adenosyl-L-methionine + phosphate + diphosphate. It functions in the pathway amino-acid biosynthesis; S-adenosyl-L-methionine biosynthesis; S-adenosyl-L-methionine from L-methionine: step 1/1. Its function is as follows. Catalyzes the formation of S-adenosylmethionine (AdoMet) from methionine and ATP. The overall synthetic reaction is composed of two sequential steps, AdoMet formation and the subsequent tripolyphosphate hydrolysis which occurs prior to release of AdoMet from the enzyme. The chain is S-adenosylmethionine synthase from Shewanella putrefaciens (strain CN-32 / ATCC BAA-453).